A 406-amino-acid polypeptide reads, in one-letter code: Kelch domain-containing protein 2 (406 aa).

Kelch repeat units lie at residues 31–85 (ERSG…NTEG), 92–136 (SGSC…ERID), 148–207 (LGVW…TWSQ), 221–259 (HACA…NELI), 271–311 (HSLT…IQFN), and 322–359 (HTAC…IFSV).

Component of a CRL2(KLHDC2) E3 ubiquitin-protein ligase complex, also named ECS(KLHDC2) complex, composed of CUL2, Elongin BC (ELOB and ELOC), RBX1 and substrate-specific adapter KLHDC2. May form oligomers as a KLHDC2-ELOB-ELOC complex; this interaction is autoinhibitory for the E3 ligase complex as the substrate-binding site of KLHDC2 is blocked in the oligomer. Interacts with CREB3; interaction is direct and specific as it does not interact with CREB1, ATF4, ATF6, JUN, FOS, CEBPA or herpes simplex virus transactivator VP16. Post-translationally, autoubiquitinated by the CRL2(KLHDC2) E3 ligase complex. As to expression, widely expressed, with high levels in skeletal muscle, heart, pancreas and liver. Undetectable in peripheral blood leukocytes.

It is found in the nucleus. The protein operates within protein modification; protein ubiquitination. Its function is as follows. Substrate-recognition component of a Cul2-RING (CRL2) E3 ubiquitin-protein ligase complex of the DesCEND (destruction via C-end degrons) pathway, which recognizes a C-degron located at the extreme C terminus of target proteins, leading to their ubiquitination and degradation. The C-degron recognized by the DesCEND pathway is usually a motif of less than ten residues and can be present in full-length proteins, truncated proteins or proteolytically cleaved forms. The CRL2(KLHDC2) complex specifically recognizes proteins with a diglycine (Gly-Gly) at the C-terminus, leading to their ubiquitination and degradation. The CRL2(KLHDC2) complex mediates ubiquitination and degradation of truncated SELENOK and SELENOS selenoproteins produced by failed UGA/Sec decoding, which end with a diglycine. The CRL2(KLHDC2) complex also recognizes proteolytically cleaved proteins ending with Gly-Gly, such as the N-terminal fragment of USP1, leading to their degradation. May also act as an indirect repressor of CREB3-mediated transcription by interfering with CREB3-DNA-binding. In Homo sapiens (Human), this protein is Kelch domain-containing protein 2.